The primary structure comprises 498 residues: Putative BTB/POZ domain-containing protein L67 (498 aa).

The BTB domain occupies 26–96; that stretch reads SDINITLSDN…MYGISLSEIN (71 aa).

This sequence belongs to the mimivirus BTB/WD family.

In Acanthamoeba polyphaga (Amoeba), this protein is Putative BTB/POZ domain-containing protein L67.